The sequence spans 113 residues: Iron-sulfur cluster insertion protein ErpA (113 aa).

Iron-sulfur cluster contacts are provided by cysteine 41, cysteine 105, and cysteine 107.

This sequence belongs to the HesB/IscA family. As to quaternary structure, homodimer. It depends on iron-sulfur cluster as a cofactor.

Its function is as follows. Required for insertion of 4Fe-4S clusters for at least IspG. This chain is Iron-sulfur cluster insertion protein ErpA, found in Histophilus somni (strain 129Pt) (Haemophilus somnus).